We begin with the raw amino-acid sequence, 69 residues long: Metallothionein-like protein CRS5 (69 aa).

Belongs to the metallothionein superfamily. Type 13 family.

In terms of biological role, critical role in copper (specific) homeostasis and detoxification. May protect by directly chelating and sequestering copper ions. The sequence is that of Metallothionein-like protein CRS5 (CRS5) from Saccharomyces cerevisiae (strain RM11-1a) (Baker's yeast).